The primary structure comprises 131 residues: NADH dehydrogenase [ubiquinone] 1 alpha subcomplex subunit 6 (131 aa).

This sequence belongs to the complex I LYR family. In terms of assembly, mammalian complex I is composed of 45 different subunits.

The protein resides in the mitochondrion inner membrane. Accessory subunit of the mitochondrial membrane respiratory chain NADH dehydrogenase (Complex I), that is believed to be not involved in catalysis. Required for proper complex I assembly. Complex I functions in the transfer of electrons from NADH to the respiratory chain. The immediate electron acceptor for the enzyme is believed to be ubiquinone. This chain is NADH dehydrogenase [ubiquinone] 1 alpha subcomplex subunit 6, found in Mus musculus (Mouse).